The sequence spans 61 residues: MDPNCSCEAGGSCACAGSCKCKKCKCTSCKKSCCSCCPLGCAKCAQGCICKGASEKCSCCA.

N-acetylmethionine is present on M1. Residues 1–29 are beta; sequence MDPNCSCEAGGSCACAGSCKCKKCKCTSC. A divalent metal cation contacts are provided by C5, C7, C13, C15, C19, C21, C24, C26, C29, C33, C34, C36, C37, C41, C44, C48, C50, and C57. Residues 30–61 are alpha; that stretch reads KKSCCSCCPLGCAKCAQGCICKGASEKCSCCA. S58 is modified (phosphoserine). A divalent metal cation contacts are provided by C59 and C60.

Belongs to the metallothionein superfamily. Type 1 family. In terms of assembly, monomer.

Metallothioneins have a high content of cysteine residues that bind various heavy metals; these proteins are transcriptionally regulated by both heavy metals and glucocorticoids. This Homo sapiens (Human) protein is Metallothionein-1H (MT1H).